Reading from the N-terminus, the 305-residue chain is Ornithine carbamoyltransferase, catabolic (305 aa).

Carbamoyl phosphate-binding positions include 50 to 53 (STRT), glutamine 77, arginine 101, and 128 to 131 (HPLQ). L-ornithine-binding positions include asparagine 159, aspartate 223, and 227 to 228 (SM). Residues 263–264 (CL) and arginine 291 contribute to the carbamoyl phosphate site.

It belongs to the aspartate/ornithine carbamoyltransferase superfamily. OTCase family.

Its subcellular location is the cytoplasm. It catalyses the reaction carbamoyl phosphate + L-ornithine = L-citrulline + phosphate + H(+). It participates in amino-acid degradation; L-arginine degradation via ADI pathway; carbamoyl phosphate from L-arginine: step 2/2. Functionally, reversibly catalyzes the transfer of the carbamoyl group from carbamoyl phosphate (CP) to the N(epsilon) atom of ornithine (ORN) to produce L-citrulline. This is Ornithine carbamoyltransferase, catabolic from Thermoplasma acidophilum (strain ATCC 25905 / DSM 1728 / JCM 9062 / NBRC 15155 / AMRC-C165).